The sequence spans 140 residues: ATP synthase epsilon chain (140 aa).

This sequence belongs to the ATPase epsilon chain family. F-type ATPases have 2 components, CF(1) - the catalytic core - and CF(0) - the membrane proton channel. CF(1) has five subunits: alpha(3), beta(3), gamma(1), delta(1), epsilon(1). CF(0) has three main subunits: a, b and c.

The protein resides in the cell inner membrane. Produces ATP from ADP in the presence of a proton gradient across the membrane. This Vibrio alginolyticus protein is ATP synthase epsilon chain (atpC).